Here is a 614-residue protein sequence, read N- to C-terminus: MEEREKVVFAATLAATFKPDLMTNDKIEAATKGHGTLVIPVLCAANSIAEDMFGAVEEPGMRLMGSATLVDAAAPLLPLDLVIQKAVNEAKNAGASPENAALIVAALAYFSGAAARAGVPMANRKLGAMARMHAGASRTSGIALVTNKFTHRMPTFPAYKAVFEQLLDKKLTRVDGSVLPPFIAGGAIYGHSALGEDVNIPELAKNAAKVGTEAMMRAMEGAGITPYPLWPALIGATVAMEILHPDAFLGEEYGAFGSVDSAYMAGKGAAEAAGLPEKIHVRGTGEEFDTARVIGDFGLILKDIGGSSVIDSMALNEIFAGFEESPIIGAGFSGGPVNPPLGHLCGDSVPAIRLLMKYEGDIYKVAEEIRNYKMNSFIDPEMALCALNTITRKAEEVKRGPVTRACMIASENVRGRAVYRRAVKAYEMLKEGKSVDEVAKALDEERKAYVEKRGSAILSAFTGKKIEFRFTELRPQARRTDGFTKKYWGFDSYISYDVTIDGKTYHIENLSAKAVVDFALEGKGRDDPDYGTALFAGAVLAQELQYIGHTIINVTVPAAVAAILGADEKDAAKMAENGAYLTRAIPGAKNNAKEVAKLAKMIYSRLQEKGEILP.

This is an uncharacterized protein from Archaeoglobus fulgidus (strain ATCC 49558 / DSM 4304 / JCM 9628 / NBRC 100126 / VC-16).